A 788-amino-acid polypeptide reads, in one-letter code: MKPTTRCPFDYLVSQCGKHHFKTFVQLLSPLLQDEDPDRYALILDIMDAVHFSAILIDDIANQSALRRNQPAAHVVFGETETATRAYLVLLRVVNRTMRENPVLAGELLNSLEEIHQGQDESLVWRRDGLETFPVADDERLAAYVRMSRLKTGSLFVLLGRLLANGGTEFDDLLVRFGLYAQLQHDCKNIYSPEYALNKGSVAEDLRNGELSYPVVVALIENKAEGIVGEALRTRSDGDTEQALRVLESPAVKDACLHALEAASVGLEDLVEAWGRREKMRSDTLDGDDLTRPSTITQHEQDDHVDRAAIDAKSDASGSSNKSLTPPETAPTTDTLSETAVGDISSVDVDYWTRRCVPIIGSLLKSCRVYSEAERETQLRFLQEHVLPNLGPRPSSPGSQIQSMATFSGFPLQPSINLSGSGQAKVRYTFEPLDSLSGTEVDPFALAPAQRVLEKLSTLLGVWPGWIDALIAAYHPTREEVEQLHPNLHEYLRGVLVRTTGRQDVQVPPMPRMWVCFVALDLEGASQALKVYFDPKIKEAVTGIPSCKYTCQILRTVDRFGNAKAVDMLEQFLAEEHSIGAVELIAIDCVPEEMQPSARIKVYVHTMSNSFQTVRKYMTMGGRCMDPATLEGLENLHDVWYSLLGESQGIVNEEYSKPLTGFSSMQHHLYFSYEMTPGNADPGVKVYIPVQSYAPDDKTIAQNYEANFRQLNWPWGEPGVYEAVIESALGPVKHSRATFLHGGSSFIFSKGRGVYQSIYLDPPLEEGGNIAVFEHHDDQDTIVDLGNM.

Substrate contacts are provided by Lys-18 and His-51. Asp-58 is a Mg(2+) binding site. Substrate contacts are provided by Arg-67, Lys-151, Thr-152, Gln-182, Asn-189, and Lys-199. Residues 283-337 (DTLDGDDLTRPSTITQHEQDDHVDRAAIDAKSDASGSSNKSLTPPETAPTTDTLS) form a disordered region. The span at 299–314 (HEQDDHVDRAAIDAKS) shows a compositional bias: basic and acidic residues. The span at 316-337 (ASGSSNKSLTPPETAPTTDTLS) shows a compositional bias: polar residues. 404 to 405 (MA) contacts L-tryptophan. Substrate is bound by residues Arg-427, Arg-599, Lys-601, Tyr-603, and Tyr-687.

The protein in the N-terminal section; belongs to the FPP/GGPP synthase family. It in the C-terminal section; belongs to the tryptophan dimethylallyltransferase family. Mg(2+) serves as cofactor.

The protein operates within secondary metabolite biosynthesis. Multi-functional prenyltransferase; part of the gene cluster that mediates the biosynthesis of lolitrems, indole-diterpene mycotoxins that are potent tremorgens in mammals, and are synthesized by clavicipitaceous fungal endophytes in association with their grass hosts. The geranylgeranyl diphosphate (GGPP) synthase ltmG is proposed to catalyze the first step in lolitrem biosynthesis. LtmG catalyzes a series of iterative condensations of isopentenyl diphosphate (IPP) with dimethylallyl diphosphate (DMAPP), geranyl diphosphate (GPP), and farnesyl diphosphate (FPP), to form GGPP. GGPP then condenses with indole-3-glycerol phosphate to form 3-geranylgeranylindole, an acyclic intermediate, to be incorporated into paxilline. Either ltmG or ltmC could be responsible for this step, as both are putative prenyl transferases. The FAD-dependent monooxygenase ltmM then catalyzes the epoxidation of the two terminal alkenes of the geranylgeranyl moiety, which is subsequently cyclized by ltmB, to paspaline. The cytochrome P450 monooxygenases ltmQ and ltmP can sequentially oxidize paspaline to terpendole E and terpendole F. Alternatively, ltmP converts paspaline to an intermediate which is oxidized by ltmQ to terpendole F. LtmF, ltmK, ltmE and ltmJ appear to be unique to the epichloe endophytes. The prenyltransferase ltmF is involved in the 27-hydroxyl-O-prenylation. The cytochrome P450 monooxygenase ltmK is required for the oxidative acetal ring formation. The multi-functional prenyltransferase ltmE is required for C20- and C21-prenylations of the indole ring of paspalanes and acts together with the cytochrome P450 monooxygenase ltmJ to yield lolitremanes by multiple oxidations and ring closures. The stereoisomer pairs of lolitriol and lolitrem N or lolitrem B and lolitrem F may be attributed to variations in the way in which ring closure can occur under the action of ltmJ. While the major product of this pathway is lolitrem B, the prenyl transferases and cytochrome P450 monooxygenases identified in this pathway have a remarkable versatility in their regio- and stereo-specificities to generate a diverse range of metabolites that are products of a metabolic grid rather than a linear pathway. The chain is Multi-functional prenyltransferase ltmE from Epichloe festucae var. lolii (Neotyphodium lolii).